Consider the following 146-residue polypeptide: Ferredoxin-thioredoxin reductase catalytic chain, chloroplastic (146 aa).

Residues M1–R31 constitute a chloroplast transit peptide. Position 85 (C85) interacts with [4Fe-4S] cluster. C87 serves as the catalytic Nucleophile. C87 and C117 form a disulfide bridge. 3 residues coordinate [4Fe-4S] cluster: C104, C106, and C115.

It belongs to the ferredoxin thioredoxin reductase beta subunit family. As to quaternary structure, heterodimer of subunit A (variable subunit) and subunit B (catalytic subunit). Heterodimeric FTR forms a complex with ferredoxin and thioredoxin. Requires [4Fe-4S] cluster as cofactor.

It localises to the plastid. Its subcellular location is the chloroplast. The enzyme catalyses [thioredoxin]-disulfide + 2 reduced [2Fe-2S]-[ferredoxin] + 2 H(+) = [thioredoxin]-dithiol + 2 oxidized [2Fe-2S]-[ferredoxin]. In terms of biological role, catalytic subunit of the ferredoxin-thioredoxin reductase (FTR), which catalyzes the two-electron reduction of thioredoxins by the electrons provided by reduced ferredoxin. This is Ferredoxin-thioredoxin reductase catalytic chain, chloroplastic from Arabidopsis thaliana (Mouse-ear cress).